We begin with the raw amino-acid sequence, 373 residues long: Probable cysteine protease RD19C (373 aa).

The signal sequence occupies residues 1 to 20 (MDRVVFFFLIAATLLAGSLG). Positions 21–139 (STVISGEVTD…QTAPILPTSD (119 aa)) are cleaved as a propeptide — activation peptide. 2 disulfide bridges follow: Cys-161–Cys-211 and Cys-195–Cys-245. Cys-164 is a catalytic residue. The N-linked (GlcNAc...) asparagine glycan is linked to Asn-258. The cysteines at positions 301 and 356 are disulfide-linked. Catalysis depends on residues His-307 and Asn-334.

The protein belongs to the peptidase C1 family.

The protein localises to the lytic vacuole. Its function is as follows. Probable thiol protease. This is Probable cysteine protease RD19C from Arabidopsis thaliana (Mouse-ear cress).